The following is a 360-amino-acid chain: N-acetylmuramoyl-L-alanine amidase CwlL (360 aa).

Positions Met1–Ala39 are cleaved as a signal peptide. The N-acetylmuramoyl-L-alanine amidase domain occupies Leu40 to Pro154. Repeat copies occupy residues Arg166–Ser191, Leu196–Leu259, Lys265–Ser289, and Leu291–Leu355. 2 2 X approximate repeats regions span residues Arg166–Ser289 and Leu196–Leu355.

Belongs to the N-acetylmuramoyl-L-alanine amidase 2 family.

Its subcellular location is the secreted. The enzyme catalyses Hydrolyzes the link between N-acetylmuramoyl residues and L-amino acid residues in certain cell-wall glycopeptides.. This chain is N-acetylmuramoyl-L-alanine amidase CwlL (cwlL), found in Bacillus licheniformis.